The chain runs to 196 residues: Calmodulin-like protein 4 (196 aa).

A disordered region spans residues 1 to 43; the sequence is MAAEHLLPGPPPSLADFRLEAGGKGTERGSGSSKPTGSSRGPR. The segment covering 17 to 27 has biased composition (basic and acidic residues); the sequence is FRLEAGGKGTE. Over residues 29 to 39 the composition is skewed to polar residues; the sequence is GSGSSKPTGSS. EF-hand domains lie at 51–86, 87–122, 124–159, and 160–195; these read DQIN…LGAS, PTPG…QIKQ, DPKK…LGEK, and LTHK…PGRD.

It belongs to the calmodulin family. In terms of assembly, interacts with MYO7B; the interaction mediates the association of CALML4 with the IMAC/intermicrovillar adhesion complex. Interacts with MYO7A. In terms of tissue distribution, expressed in the intestinal tract. As to expression, dominant transcript in the intestinal tract.

The protein localises to the cell projection. The protein resides in the microvillus. Its function is as follows. As part of the intermicrovillar adhesion complex/IMAC plays a role in epithelial brush border differentiation, controlling microvilli organization and length. Acts as a light chain for MYO7B and is required for efficient targeting of the IMAC to the tips of border brush microvilli. This Homo sapiens (Human) protein is Calmodulin-like protein 4.